The primary structure comprises 107 residues: MAGSYGVMADDGSIDYTVHEAWNEATNVYLIVILVSFGLFMYAKRNKRKIMRIFSVPPTEGMLSEPSFYDTVSRIRLRQQVEAHPVSRKYEYQQPQSQADSVQLSLE.

The helical transmembrane segment at 25 to 43 (ATNVYLIVILVSFGLFMYA) threads the bilayer. The disordered stretch occupies residues 88–107 (RKYEYQQPQSQADSVQLSLE). Residues 93-107 (QQPQSQADSVQLSLE) are compositionally biased toward polar residues.

Belongs to the SMIM19 family.

The protein localises to the membrane. The sequence is that of Small integral membrane protein 19 (Smim19) from Mus musculus (Mouse).